The following is a 515-amino-acid chain: 2-isopropylmalate synthase (515 aa).

The 263-residue stretch at 4–266 (IKFFDTTLRD…ETRLNLQEIK (263 aa)) folds into the Pyruvate carboxyltransferase domain. 4 residues coordinate Mn(2+): Asp13, His201, His203, and Asn237. Residues 391 to 515 (QLSSIQVQYG…RAENEKVATS (125 aa)) are regulatory domain.

It belongs to the alpha-IPM synthase/homocitrate synthase family. LeuA type 1 subfamily. As to quaternary structure, homodimer. Mn(2+) is required as a cofactor.

The protein resides in the cytoplasm. The enzyme catalyses 3-methyl-2-oxobutanoate + acetyl-CoA + H2O = (2S)-2-isopropylmalate + CoA + H(+). Its pathway is amino-acid biosynthesis; L-leucine biosynthesis; L-leucine from 3-methyl-2-oxobutanoate: step 1/4. Catalyzes the condensation of the acetyl group of acetyl-CoA with 3-methyl-2-oxobutanoate (2-ketoisovalerate) to form 3-carboxy-3-hydroxy-4-methylpentanoate (2-isopropylmalate). The chain is 2-isopropylmalate synthase from Geobacillus stearothermophilus (Bacillus stearothermophilus).